Reading from the N-terminus, the 114-residue chain is T cell receptor beta variable 9 (114 aa).

Positions 1–21 (MGFRLLCCVAFCLLGAGPVDS) are cleaved as a signal peptide. One can recognise an Ig-like domain in the interval 22-114 (GVTQTPKHLI…SALYFCASSV (93 aa)). Cysteines 42 and 110 form a disulfide. Asn-96 is a glycosylation site (N-linked (GlcNAc...) asparagine).

In terms of assembly, alpha-beta TR is a heterodimer composed of an alpha and beta chain; disulfide-linked. The alpha-beta TR is associated with the transmembrane signaling CD3 coreceptor proteins to form the TR-CD3 (TcR or TCR). The assembly of alpha-beta TR heterodimers with CD3 occurs in the endoplasmic reticulum where a single alpha-beta TR heterodimer associates with one CD3D-CD3E heterodimer, one CD3G-CD3E heterodimer and one CD247 homodimer forming a stable octameric structure. CD3D-CD3E and CD3G-CD3E heterodimers preferentially associate with TR alpha and TR beta chains, respectively. The association of the CD247 homodimer is the last step of TcR assembly in the endoplasmic reticulum and is required for transport to the cell surface.

It is found in the cell membrane. In terms of biological role, v region of the variable domain of T cell receptor (TR) beta chain that participates in the antigen recognition. Alpha-beta T cell receptors are antigen specific receptors which are essential to the immune response and are present on the cell surface of T lymphocytes. Recognize peptide-major histocompatibility (MH) (pMH) complexes that are displayed by antigen presenting cells (APC), a prerequisite for efficient T cell adaptive immunity against pathogens. Binding of alpha-beta TR to pMH complex initiates TR-CD3 clustering on the cell surface and intracellular activation of LCK that phosphorylates the ITAM motifs of CD3G, CD3D, CD3E and CD247 enabling the recruitment of ZAP70. In turn ZAP70 phosphorylates LAT, which recruits numerous signaling molecules to form the LAT signalosome. The LAT signalosome propagates signal branching to three major signaling pathways, the calcium, the mitogen-activated protein kinase (MAPK) kinase and the nuclear factor NF-kappa-B (NF-kB) pathways, leading to the mobilization of transcription factors that are critical for gene expression and essential for T cell growth and differentiation. The T cell repertoire is generated in the thymus, by V-(D)-J rearrangement. This repertoire is then shaped by intrathymic selection events to generate a peripheral T cell pool of self-MH restricted, non-autoaggressive T cells. Post-thymic interaction of alpha-beta TR with the pMH complexes shapes TR structural and functional avidity. The polypeptide is T cell receptor beta variable 9 (Homo sapiens (Human)).